The sequence spans 463 residues: Asparagine--tRNA ligase (463 aa).

This sequence belongs to the class-II aminoacyl-tRNA synthetase family. Homodimer.

The protein resides in the cytoplasm. The catalysed reaction is tRNA(Asn) + L-asparagine + ATP = L-asparaginyl-tRNA(Asn) + AMP + diphosphate + H(+). In Clostridium novyi (strain NT), this protein is Asparagine--tRNA ligase.